Reading from the N-terminus, the 500-residue chain is Probable cytosol aminopeptidase (500 aa).

Residues Lys261 and Asp266 each coordinate Mn(2+). Lys273 is a catalytic residue. Residues Asp284, Asp343, and Glu345 each contribute to the Mn(2+) site. The active site involves Arg347.

It belongs to the peptidase M17 family. Mn(2+) is required as a cofactor.

The protein resides in the cytoplasm. It carries out the reaction Release of an N-terminal amino acid, Xaa-|-Yaa-, in which Xaa is preferably Leu, but may be other amino acids including Pro although not Arg or Lys, and Yaa may be Pro. Amino acid amides and methyl esters are also readily hydrolyzed, but rates on arylamides are exceedingly low.. The enzyme catalyses Release of an N-terminal amino acid, preferentially leucine, but not glutamic or aspartic acids.. In terms of biological role, presumably involved in the processing and regular turnover of intracellular proteins. Catalyzes the removal of unsubstituted N-terminal amino acids from various peptides. The polypeptide is Probable cytosol aminopeptidase (pepA) (Bacillus subtilis (strain 168)).